Reading from the N-terminus, the 338-residue chain is MTEKFNGFSHDEILKITGVKEGGVGKRPASLEAAKPALRIQPGIRRMPDKIFRQADQLRKQQQQQPQQPIQKPDVAKKTKSGTATPTEKPPTPTPAAEDDVANGSLNLDRPLSDSLIEALYHGNATARDKKTPATYADAETTSTDDSSILKISGGDSQTTSSTDDGSILPSTQDTSPRERLNTDSPFKGISLKDFEQHRRMIEEQNKQKKQMLYQAIEQHTQKTAAESRKIEEIRHELSKLESDLAVDVALLRKQIDNACIHFANVEKQYVKIEAQFLRAKIELHNASEKKELLTEHLCTVIAHNEDRKAQKLTELMQKVGLSPTDDCQPIDLTQQSP.

Composition is skewed to basic and acidic residues over residues 1–14 and 46–59; these read MTEK…DEIL and RMPD…DQLR. 2 disordered regions span residues 1–109 and 127–188; these read MTEK…LNLD and ARDK…SPFK. Composition is skewed to low complexity over residues 60 to 73 and 153 to 167; these read KQQQ…IQKP and SGGD…DDGS. A coiled-coil region spans residues 192–244; the sequence is LKDFEQHRRMIEEQNKQKKQMLYQAIEQHTQKTAAESRKIEEIRHELSKLESD. The essential for Sas-6 binding stretch occupies residues 244-260; it reads DLAVDVALLRKQIDNAC. The tract at residues 246–286 is necessary for localization to the centrosome; that stretch reads AVDVALLRKQIDNACIHFANVEKQYVKIEAQFLRAKIELHN. The segment at 246–323 is necessary for localization to the Golgi; it reads AVDVALLRKQ…TELMQKVGLS (78 aa). The necessary for interaction with Sas-6 and essential for homodimerization stretch occupies residues 260–286; sequence CIHFANVEKQYVKIEAQFLRAKIELHN.

This sequence belongs to the GORAB family. As to quaternary structure, homodimer (via C-terminus); dimerization appears to be required for its trans-Golgi localization but not for its function and centriolar localization. Interacts (via C-terminus) with Rab6; binds Rab6 as a homodimer, this interaction seems to be required for trans-Golgi localization. Interacts (via C-terminus) with Sas-6; binds as a monomer to a Sas-6 homodimer.

The protein localises to the cytoplasm. The protein resides in the cytoskeleton. It localises to the microtubule organizing center. It is found in the centrosome. Its subcellular location is the centriole. The protein localises to the golgi apparatus. The protein resides in the trans-Golgi network. Required for centriole duplication likely through its interaction with Sas-6. During embryogenesis, maternally provided protein is required for centrosome duplication and nuclear division cycles of the syncytial embryos. In femoral chordotonal organs, required for sensory cilia structural integrity and functionality necessary for motor coordination. In male germline, has a role in cytokinesis which seems dependent on its localization to the Golgi. This is RAB6-interacting golgin from Drosophila melanogaster (Fruit fly).